The following is a 142-amino-acid chain: Hemoglobin subunit alpha-3 (142 aa).

Positions 2-142 (TLTDSDKAAV…VATVLTSKYR (141 aa)) constitute a Globin domain. An O2-binding site is contributed by H59. H88 is a heme b binding site.

The protein belongs to the globin family. In terms of assembly, heterotetramer of two alpha chains and two beta chains. In terms of tissue distribution, red blood cells.

This is a larval (tadpole) alpha-globin. The protein is Hemoglobin subunit alpha-3 (hba3) of Xenopus laevis (African clawed frog).